The primary structure comprises 300 residues: GTPase Era (300 aa).

In terms of domain architecture, Era-type G spans 5-176 (HSGFVCLVGR…IDVLAAALPA (172 aa)). Positions 13–20 (GRPNTGKS) are G1. 13–20 (GRPNTGKS) is a binding site for GTP. A G2 region spans residues 39–43 (QTTRH). The segment at 60–63 (DTPG) is G3. Residues 60 to 64 (DTPGL) and 125 to 128 (TKID) contribute to the GTP site. Residues 125 to 128 (TKID) form a G4 region. A G5 region spans residues 155–157 (VSA). Residues 207–286 (VRDELPHSLA…YLDLRVKVAK (80 aa)) form the KH type-2 domain.

It belongs to the TRAFAC class TrmE-Era-EngA-EngB-Septin-like GTPase superfamily. Era GTPase family. As to quaternary structure, monomer.

It is found in the cell envelope. It localises to the secreted. The protein localises to the cell wall. Functionally, exhibits GTPase activity. Binds RNA but is probably not involved in ribosome assembly in mycobacteria. The chain is GTPase Era from Mycobacterium bovis (strain ATCC BAA-935 / AF2122/97).